A 253-amino-acid chain; its full sequence is Small ribosomal subunit protein uS2 (253 aa).

This sequence belongs to the universal ribosomal protein uS2 family.

This Parvibaculum lavamentivorans (strain DS-1 / DSM 13023 / NCIMB 13966) protein is Small ribosomal subunit protein uS2.